The following is a 374-amino-acid chain: Lactoyl-CoA dehydratase subunit beta (374 aa).

It belongs to the FldB/FldC dehydratase alpha/beta subunit family. As to quaternary structure, heterodimer of an alpha (LcdA) and a beta (LcdB) subunit. Requires [4Fe-4S] cluster as cofactor. The cofactor is FMN. It depends on riboflavin as a cofactor. Mg(2+) is required as a cofactor.

The enzyme catalyses (R)-lactoyl-CoA = acryloyl-CoA + H2O. It carries out the reaction (2R)-hydroxybutanoyl-CoA = (2E)-butenoyl-CoA + H2O. Its activity is regulated as follows. Activated by the LcdC protein. Its function is as follows. Involved in the acrylate pathway for the conversion of D-lactic acid to propionic acid. Catalyzes the reversible dehydration of Lactoyl-CoA and 2-hydroxybutyroyl-CoA to acryloyl-CoA and crotonyl-CoA, respectively. The sequence is that of Lactoyl-CoA dehydratase subunit beta (lcdB) from Anaerotignum propionicum (Clostridium propionicum).